A 407-amino-acid polypeptide reads, in one-letter code: Histone-lysine N-methyltransferase SUV39H2 (407 aa).

Residues 43-101 enclose the Chromo domain; sequence YEVEYLCDYKVEEGKEYYLVKWKGWPESSNTWEPQKNLKCPKLLENFLSDKDEYLSRMK. One can recognise a Pre-SET domain in the interval 185 to 243; it reads TGCECSDCPAEKCCPKEAGFILAYNKQKKLKIQPGLPIYECNSFCRCGPDCPNRIVQKG. 9 residues coordinate Zn(2+): Cys-187, Cys-189, Cys-192, Cys-197, Cys-198, Cys-225, Cys-229, Cys-231, and Cys-235. The region spanning 246–369 is the SET domain; it reads YSLCIFRTNN…AGEELTFDYQ (124 aa). S-adenosyl-L-methionine contacts are provided by residues 257 to 259, Tyr-300, and 326 to 327; these read RGW and NH. Zn(2+)-binding residues include Cys-329, Cys-395, Cys-397, and Cys-402. Positions 391–407 constitute a Post-SET domain; sequence IRTVCKCGAVCCRGYLN.

Belongs to the class V-like SAM-binding methyltransferase superfamily. Histone-lysine methyltransferase family. Suvar3-9 subfamily.

Its subcellular location is the nucleus. It localises to the chromosome. It is found in the centromere. It carries out the reaction L-lysyl(9)-[histone H3] + 3 S-adenosyl-L-methionine = N(6),N(6),N(6)-trimethyl-L-lysyl(9)-[histone H3] + 3 S-adenosyl-L-homocysteine + 3 H(+). Functionally, histone methyltransferase that specifically trimethylates 'Lys-9' of histone H3 using monomethylated H3 'Lys-9' as substrate. H3 'Lys-9' trimethylation represents a specific tag for epigenetic transcriptional repression by recruiting HP1 (CBX1, CBX3 and/or CBX5) proteins to methylated histones. Mainly functions in heterochromatin regions, thereby playing a central role in the establishment of constitutive heterochromatin at pericentric and telomere regions. H3 'Lys-9' trimethylation is also required to direct DNA methylation at pericentric repeats. SUV39H1 is targeted to histone H3 via its interaction with RB1 and is involved in many processes. This is Histone-lysine N-methyltransferase SUV39H2 (SUV39H2) from Gallus gallus (Chicken).